The chain runs to 1567 residues: Ice nucleation protein (1567 aa).

Residues 130-185 (PAAEPSAPATQATSATLPTPATPSTQATPSTQSTQSTQSTEATQSTEATPVATVAA) show a composition bias toward low complexity. 13 disordered regions span residues 130–195 (PAAE…QQHD), 270–329 (YGST…KGSD), 356–378 (AGSESSLTAGYGSTQTARKGSDV), 449–474 (TQTSGSDSSLTAGYGSTQTARKGSDI), 502–529 (SESSLTAGYGSTQTAQQDSSLTTGYGST), 594–620 (QTAGSDSSLTAGYGSTQTAREGSDVTA), 642–668 (QTSGSDSSLTAGYGSTQTARKGSDVTA), 689–716 (TQTSGSDSSLTAGYGSTQTARKGSDVTA), 738–764 (QTSGSDSSLTAGYGSTQTARKGSDVTA), 785–810 (TQTSGSDSSLTAGYGSTQTARKGSDI), 833–860 (TQTSGSDSSLTAGYGSTQTAREGSDVTA), 929–959 (TQTSGSDSSLTAGYGSTQTARKGSDMTAGYG), and 977–1004 (TQTSGSDSSLTAGYGSTQTAREGSDVTA). A compositionally biased stretch (polar residues) spans 270–282 (YGSTQTAQEGSRL). The span at 283–296 (TSGYGSTATSGSDS) shows a compositional bias: low complexity. Polar residues-rich tracts occupy residues 302 to 325 (YGSTQTAGSESSLTAGYGSTQTAR), 356 to 373 (AGSESSLTAGYGSTQTAR), 449 to 469 (TQTSGSDSSLTAGYGSTQTAR), and 502 to 519 (SESSLTAGYGSTQTAQQD). Residues 520 to 529 (SSLTTGYGST) show a composition bias toward low complexity. 8 stretches are compositionally biased toward polar residues: residues 594 to 613 (QTAGSDSSLTAGYGSTQTAR), 642 to 661 (QTSGSDSSLTAGYGSTQTAR), 689 to 709 (TQTSGSDSSLTAGYGSTQTAR), 738 to 757 (QTSGSDSSLTAGYGSTQTAR), 785 to 805 (TQTSGSDSSLTAGYGSTQTAR), 833 to 853 (TQTSGSDSSLTAGYGSTQTAR), 929 to 949 (TQTSGSDSSLTAGYGSTQTAR), and 977 to 997 (TQTSGSDSSLTAGYGSTQTAR).

The protein belongs to the bacterial ice nucleation protein family.

It localises to the cell outer membrane. Ice nucleation proteins enable bacteria to nucleate crystallization in supercooled water. This is Ice nucleation protein (inaX) from Xanthomonas campestris pv. translucens.